The primary structure comprises 315 residues: N-acetyl-D-glutamate racemase (315 aa).

Positions 147, 173, and 196 each coordinate Mg(2+).

It belongs to the mandelate racemase/muconate lactonizing enzyme family. Mg(2+) is required as a cofactor.

The enzyme catalyses N-acetyl-D-glutamate = N-acetyl-L-glutamate. It functions in the pathway amino-acid degradation. Its function is as follows. Racemase involved in a deamination-independent D-glutamate degradation pathway, named the DgcN-DgcA pathway. Catalyzes the conversion of N-acetyl-D-glutamate to N-acetyl-L-glutamate. Also shows racemase activity towards the dipeptide L-Ala-D-Glu, a key constituent of peptidoglycan muropeptides, suggesting that it may also contribute to the degradation of peptidoglycans. The polypeptide is N-acetyl-D-glutamate racemase (Pseudoalteromonas sp).